A 193-amino-acid polypeptide reads, in one-letter code: Probable GTP-binding protein EngB (193 aa).

The EngB-type G domain maps to 20–193 (GVPEVAFAGR…ELAHEISRCI (174 aa)). Residues 28–35 (GRSNVGKS), 55–59 (GSTRQ), 73–76 (DLPG), 140–143 (TKAD), and 171–176 (IMWVSS) each bind GTP. Residues serine 35 and threonine 57 each contribute to the Mg(2+) site.

The protein belongs to the TRAFAC class TrmE-Era-EngA-EngB-Septin-like GTPase superfamily. EngB GTPase family. The cofactor is Mg(2+).

In terms of biological role, necessary for normal cell division and for the maintenance of normal septation. The protein is Probable GTP-binding protein EngB of Anaplasma phagocytophilum (strain HZ).